A 614-amino-acid chain; its full sequence is Vitamin B12 transporter BtuB (614 aa).

The signal sequence occupies residues 1 to 20 (MIKKASLLTACSVTAFSAWA). A TonB box motif is present at residues 26–33 (DTLVVTAN). In terms of domain architecture, TBDR plug spans 38–152 (PRSTVLAPTT…IGGVVNIITT (115 aa)). Cyanocob(III)alamin is bound by residues leucine 83, serine 85, asparagine 92, and 110–111 (GS). The 460-residue stretch at 155–614 (EPGTEISAGW…EYTLSGSYTF (460 aa)) folds into the TBDR beta-barrel domain. A run of 3 beta stranded transmembrane segments spans residues 158–165 (TEISAGWG), 169–178 (YQNYDVSTQQ), and 184–195 (TRVTLLGDYAHT). Residues aspartate 199, glutamine 211, aspartate 213, and aspartate 215 each contribute to the Ca(2+) site. 2 beta stranded membrane-spanning segments follow: residues 217-227 (FLSKTLYGALE) and 232-248 (DAWS…NRTN). Tyrosine 249 and aspartate 250 together coordinate Ca(2+). Alanine 251 is a cyanocob(III)alamin binding site. Ca(2+) is bound at residue aspartate 261. 14 consecutive transmembrane segments (beta stranded) span residues 263 to 277 (RKLY…LRYN), 279 to 296 (ELIK…KDYN), 309 to 325 (TLDE…NNII), 328 to 337 (HGNVGAGVDW), 353 to 369 (YDQR…QQVG), 371 to 381 (FTFEGAARSDD), 385 to 400 (FGRH…WEFI), 403 to 417 (YRFI…KAPN), 434 to 443 (KSKQWEGAFE), 449 to 458 (VNWRISGYRN), 473 to 490 (YYNE…TANF), 494 to 509 (PLTH…ARNA), 517 to 529 (RRAK…QLDW), and 535 to 550 (DWGI…YDKD). Threonine 309 contacts cyanocob(III)alamin. Arginine 517 is a cyanocob(III)alamin binding site. Tyrosine 551 is a binding site for cyanocob(III)alamin. A run of 3 beta stranded transmembrane segments spans residues 558–572 (TVKM…LAVA), 585–596 (IANLFDKDYETV), and 602–614 (AGRE…SYTF). A TonB C-terminal box motif is present at residues 597–614 (YGYQTAGREYTLSGSYTF).

The protein belongs to the TonB-dependent receptor family. BtuB (TC 1.B.14.3.1) subfamily.

It is found in the cell outer membrane. Functionally, involved in the active translocation of vitamin B12 (cyanocobalamin) across the outer membrane to the periplasmic space. It derives its energy for transport by interacting with the trans-periplasmic membrane protein TonB. This is Vitamin B12 transporter BtuB from Escherichia coli O157:H7.